A 222-amino-acid polypeptide reads, in one-letter code: Endonuclease V (222 aa).

Mg(2+) contacts are provided by D34 and D102.

Belongs to the endonuclease V family. It depends on Mg(2+) as a cofactor.

It localises to the cytoplasm. It carries out the reaction Endonucleolytic cleavage at apurinic or apyrimidinic sites to products with a 5'-phosphate.. Functionally, DNA repair enzyme involved in the repair of deaminated bases. Selectively cleaves double-stranded DNA at the second phosphodiester bond 3' to a deoxyinosine leaving behind the intact lesion on the nicked DNA. In Proteus mirabilis (strain HI4320), this protein is Endonuclease V.